Reading from the N-terminus, the 499-residue chain is Glycerol kinase (499 aa).

Position 12 (Thr-12) interacts with ADP. Residues Thr-12, Thr-13, and Ser-14 each coordinate ATP. Residue Thr-12 participates in sn-glycerol 3-phosphate binding. Arg-16 contacts ADP. Sn-glycerol 3-phosphate-binding residues include Arg-82, Glu-83, Tyr-134, and Asp-245. Positions 82, 83, 134, 245, and 246 each coordinate glycerol. The ADP site is built by Thr-267 and Gly-311. Thr-267, Gly-311, Gln-315, and Gly-412 together coordinate ATP. 2 residues coordinate ADP: Gly-412 and Asn-416.

The protein belongs to the FGGY kinase family.

The catalysed reaction is glycerol + ATP = sn-glycerol 3-phosphate + ADP + H(+). It functions in the pathway polyol metabolism; glycerol degradation via glycerol kinase pathway; sn-glycerol 3-phosphate from glycerol: step 1/1. Inhibited by fructose 1,6-bisphosphate (FBP). Functionally, key enzyme in the regulation of glycerol uptake and metabolism. Catalyzes the phosphorylation of glycerol to yield sn-glycerol 3-phosphate. The polypeptide is Glycerol kinase (Brucella anthropi (strain ATCC 49188 / DSM 6882 / CCUG 24695 / JCM 21032 / LMG 3331 / NBRC 15819 / NCTC 12168 / Alc 37) (Ochrobactrum anthropi)).